We begin with the raw amino-acid sequence, 323 residues long: MHRTTRIKITELNPHLMCVLCGGYFIDAATIIECLHSFCKTCIVRYLETSKYCPICDVQVHKTRPLLNIRADKTLQDIVYKLVPGLFKGEMKRRRDFYAAHPSVDAANGSNEDRGEVADEDKRIITDDEIISLSIEFFDQNRANRKGSKDKEKSKDEANDKRYLRCPAALTIMHLRKFLRSKMDIPSNFQIDVMYEEEPLKDYYTLMDIAYIYTWRRNGPLPLKYRVRPTCKRVKINPHTDRINNTSGDMESDSGSDKAGSLGGGIPSTSSCMPRPPVQSPHPHFPHISSTINGTNSSSSHQNPFANRARKISLNGVSAISSG.

Residues cysteine 18–aspartate 57 form an RING-type zinc finger. The short motif at lysine 81 to arginine 95 is the Nuclear localization signal element. Residues proline 238–arginine 310 form a disordered region. Low complexity predominate over residues histidine 287–histidine 301.

In terms of assembly, component of a PRC1-like complex. Interacts with cbx4.

It localises to the nucleus. Component of a Polycomb group (PcG) multiprotein PRC1-like complex, a complex class required to maintain the transcriptionally repressive state of many genes, including Hox genes, throughout development. PcG PRC1 complex acts via chromatin remodeling and modification of histones; it mediates monoubiquitination of histone H2A 'Lys-119', rendering chromatin heritably changed in its expressibility. In the PRC1 complex, it is required to stimulate the E3 ubiquitin-protein ligase activity of rnf2. This chain is Polycomb complex protein BMI-1-B (bmi1b), found in Xenopus laevis (African clawed frog).